Consider the following 69-residue polypeptide: ATP synthase subunits region ORF 1 (69 aa).

The protein is ATP synthase subunits region ORF 1 of Fuscovulum blasticum (Rhodobacter blasticus).